Reading from the N-terminus, the 340-residue chain is Probable dual-specificity RNA methyltransferase RlmN (340 aa).

Catalysis depends on Glu91, which acts as the Proton acceptor. In terms of domain architecture, Radical SAM core spans 97 to 326 (HSGRVTACIS…CEIRKEKGTD (230 aa)). Cys104 and Cys331 are oxidised to a cystine. Residues Cys111, Cys115, and Cys118 each contribute to the [4Fe-4S] cluster site. S-adenosyl-L-methionine contacts are provided by residues 158-159 (GE), Ser190, 213-215 (SLH), and Asn289. Cys331 serves as the catalytic S-methylcysteine intermediate.

This sequence belongs to the radical SAM superfamily. RlmN family. Requires [4Fe-4S] cluster as cofactor.

It localises to the cytoplasm. The catalysed reaction is adenosine(2503) in 23S rRNA + 2 reduced [2Fe-2S]-[ferredoxin] + 2 S-adenosyl-L-methionine = 2-methyladenosine(2503) in 23S rRNA + 5'-deoxyadenosine + L-methionine + 2 oxidized [2Fe-2S]-[ferredoxin] + S-adenosyl-L-homocysteine. It carries out the reaction adenosine(37) in tRNA + 2 reduced [2Fe-2S]-[ferredoxin] + 2 S-adenosyl-L-methionine = 2-methyladenosine(37) in tRNA + 5'-deoxyadenosine + L-methionine + 2 oxidized [2Fe-2S]-[ferredoxin] + S-adenosyl-L-homocysteine. Functionally, specifically methylates position 2 of adenine 2503 in 23S rRNA and position 2 of adenine 37 in tRNAs. The sequence is that of Probable dual-specificity RNA methyltransferase RlmN from Thermosipho melanesiensis (strain DSM 12029 / CIP 104789 / BI429).